We begin with the raw amino-acid sequence, 91 residues long: MANIKSKEKRILTNEKARVRNAAMKSHVRLAIKKAKRAIEEKNENVEQLLKDAHKVINTSVSHGVFHRNNAARKSSRLDAYAFKIQNKTAN.

It belongs to the bacterial ribosomal protein bS20 family.

Binds directly to 16S ribosomal RNA. The polypeptide is Small ribosomal subunit protein bS20 (Mycoplasma mobile (strain ATCC 43663 / 163K / NCTC 11711) (Mesomycoplasma mobile)).